A 244-amino-acid chain; its full sequence is 14-3-3 protein beta/alpha-B (244 aa).

Met1 carries the post-translational modification N-acetylmethionine.

The protein belongs to the 14-3-3 family. In terms of assembly, homodimer, and heterodimer with other family members.

Its subcellular location is the cytoplasm. Its function is as follows. Adapter protein implicated in the regulation of a large spectrum of both general and specialized signaling pathways. Binds to a large number of partners, usually by recognition of a phosphoserine or phosphothreonine motif. Binding generally results in the modulation of the activity of the binding partner. This chain is 14-3-3 protein beta/alpha-B (ywhab-b), found in Xenopus laevis (African clawed frog).